Here is a 543-residue protein sequence, read N- to C-terminus: Excitatory amino acid transporter 1 (543 aa).

Over Met1 to Arg47 the chain is Cytoplasmic. Residues Asn48–Leu68 form a helical membrane-spanning segment. Residues Arg69–Glu86 are Extracellular-facing. The chain crosses the membrane as a helical span at residues Leu87–Met108. Residues Ala109–Arg122 lie on the Cytoplasmic side of the membrane. A helical membrane pass occupies residues Ala123–Ile145. Over His146–Gly236 the chain is Extracellular. N-linked (GlcNAc...) asparagine glycosylation is found at Asn206 and Asn216. Residues Ser237–Met260 traverse the membrane as a helical segment. The Cytoplasmic segment spans residues Lys261–Glu269. A helical transmembrane segment spans residues Phe270 to Ile297. Residues Ala298–Thr318 lie on the Extracellular side of the membrane. Residues Val319–Val340 traverse the membrane as a helical segment. Over Thr341–Pro345 the chain is Cytoplasmic. Residues Trp346–Leu376 constitute an intramembrane region (discontinuously helical). L-aspartate is bound at residue Ser363–Ser365. Residues Glu377–Arg385 lie on the Cytoplasmic side of the membrane. Residues Ile386 to Phe412 traverse the membrane as a helical segment. Gly394, Thr396, and Asn398 together coordinate Na(+). Thr402 is a binding site for L-aspartate. The Extracellular portion of the chain corresponds to Ile413–Gln425. The discontinuously helical intramembrane region spans Ile426–Gly459. Ile443 to Gly447 is a binding site for L-aspartate. Residues Leu460–Asp472 are Extracellular-facing. The chain crosses the membrane as a helical span at residues Trp473–Val494. Residues Asp476 and Asn483 each contribute to the L-aspartate site. The Na(+) site is built by Asn483 and Asp487. At Glu495–Met543 the chain is on the cytoplasmic side. Position 512 is a phosphoserine (Ser512). Positions Pro522–Met543 are disordered. Basic and acidic residues predominate over residues Glu531–Met543.

It belongs to the dicarboxylate/amino acid:cation symporter (DAACS) (TC 2.A.23) family. SLC1A3 subfamily. Homotrimer. In terms of processing, glycosylated. In terms of tissue distribution, detected in brain, in Bergmann glia arborising into the molecular layer of the cerebellum (at protein level). Localized in brain and is highly enriched in the Purkinje cell layer in cerebellum. Intermediate level in lung, low level in spleen, skeletal muscle and testis.

It is found in the cell membrane. It catalyses the reaction K(+)(in) + L-glutamate(out) + 3 Na(+)(out) + H(+)(out) = K(+)(out) + L-glutamate(in) + 3 Na(+)(in) + H(+)(in). It carries out the reaction K(+)(in) + L-aspartate(out) + 3 Na(+)(out) + H(+)(out) = K(+)(out) + L-aspartate(in) + 3 Na(+)(in) + H(+)(in). The enzyme catalyses D-aspartate(out) + K(+)(in) + 3 Na(+)(out) + H(+)(out) = D-aspartate(in) + K(+)(out) + 3 Na(+)(in) + H(+)(in). In terms of biological role, sodium-dependent, high-affinity amino acid transporter that mediates the uptake of L-glutamate and also L-aspartate and D-aspartate. Functions as a symporter that transports one amino acid molecule together with two or three Na(+) ions and one proton, in parallel with the counter-transport of one K(+) ion. Plays a redundant role in the rapid removal of released glutamate from the synaptic cleft, which is essential for terminating the postsynaptic action of glutamate. This is Excitatory amino acid transporter 1 (Slc1a3) from Mus musculus (Mouse).